The chain runs to 224 residues: Imidazoleglycerol-phosphate dehydratase (224 aa).

This sequence belongs to the imidazoleglycerol-phosphate dehydratase family.

The enzyme catalyses D-erythro-1-(imidazol-4-yl)glycerol 3-phosphate = 3-(imidazol-4-yl)-2-oxopropyl phosphate + H2O. The protein operates within amino-acid biosynthesis; L-histidine biosynthesis; L-histidine from 5-phospho-alpha-D-ribose 1-diphosphate: step 6/9. The protein is Imidazoleglycerol-phosphate dehydratase (HIS3) of Komagataella pastoris (Yeast).